We begin with the raw amino-acid sequence, 520 residues long: DNA-(apurinic or apyrimidinic site) endonuclease 2 (520 aa).

E59 is a Mg(2+) binding site. Y181 is an active-site residue. Residues D222, N224, and D353 each contribute to the Mg(2+) site. The active-site Proton donor/acceptor is D222. Positions 476, 478, 500, and 514 each coordinate Zn(2+). A GRF-type zinc finger spans residues 476-520; the sequence is CRHGEESMLKTSKTSANPGRKFWICKRSRGDSNNTESSCGFFQWV.

Belongs to the DNA repair enzymes AP/ExoA family. It depends on Mg(2+) as a cofactor. The cofactor is Mn(2+).

The protein localises to the nucleus. The enzyme catalyses Exonucleolytic cleavage in the 3'- to 5'-direction to yield nucleoside 5'-phosphates.. Its function is as follows. DNA repair enzyme that cleaves apurinic/apyrimidinic (AP) sites and removes 3'-blocking groups present at single strand breaks of damaged DNA. This Saccharomyces cerevisiae (strain ATCC 204508 / S288c) (Baker's yeast) protein is DNA-(apurinic or apyrimidinic site) endonuclease 2 (APN2).